The chain runs to 87 residues: Large ribosomal subunit protein bL27c (87 aa).

Positions 1–20 (MAHKKGSGSTKNGRDSRSQR) are disordered.

Belongs to the bacterial ribosomal protein bL27 family.

It is found in the plastid. The protein resides in the chloroplast. The chain is Large ribosomal subunit protein bL27c from Gracilaria tenuistipitata var. liui (Red alga).